The primary structure comprises 30 residues: Acyl-CoA-binding protein 1 (30 aa).

Basic and acidic residues predominate over residues A1 to T15. The tract at residues A1–G30 is disordered. The ACB domain occupies L2–G30.

It belongs to the ACBP family.

The protein resides in the cytoplasm. Functionally, binds medium- and long-chain acyl-CoA esters with very high affinity and may function as an intracellular carrier of acyl-CoA esters. This is Acyl-CoA-binding protein 1 from Digitalis lanata (Grecian foxglove).